The chain runs to 485 residues: Ribulose bisphosphate carboxylase large chain (485 aa).

Asn-124 and Thr-174 together coordinate substrate. Lys-176 (proton acceptor) is an active-site residue. Lys-178 is a binding site for substrate. Positions 202, 204, and 205 each coordinate Mg(2+). Lys-202 is modified (N6-carboxylysine). Catalysis depends on His-294, which acts as the Proton acceptor. 3 residues coordinate substrate: Arg-295, His-327, and Ser-379.

This sequence belongs to the RuBisCO large chain family. Type I subfamily. Heterohexadecamer of 8 large chains and 8 small chains. Mg(2+) serves as cofactor.

It catalyses the reaction 2 (2R)-3-phosphoglycerate + 2 H(+) = D-ribulose 1,5-bisphosphate + CO2 + H2O. The catalysed reaction is D-ribulose 1,5-bisphosphate + O2 = 2-phosphoglycolate + (2R)-3-phosphoglycerate + 2 H(+). In terms of biological role, ruBisCO catalyzes two reactions: the carboxylation of D-ribulose 1,5-bisphosphate, the primary event in carbon dioxide fixation, as well as the oxidative fragmentation of the pentose substrate. Both reactions occur simultaneously and in competition at the same active site. The polypeptide is Ribulose bisphosphate carboxylase large chain (Rhodopseudomonas palustris (strain TIE-1)).